We begin with the raw amino-acid sequence, 369 residues long: Ribonuclease D (369 aa).

Residues 4-168 form the 3'-5' exonuclease domain; the sequence is EIITTTAQLH…CLEKLQQQLE (165 aa). In terms of domain architecture, HRDC spans 207 to 286; the sequence is DRQGLAIIKA…TQVISQDEST (80 aa).

This sequence belongs to the RNase D family. The cofactor is a divalent metal cation.

The protein resides in the cytoplasm. The enzyme catalyses Exonucleolytic cleavage that removes extra residues from the 3'-terminus of tRNA to produce 5'-mononucleotides.. Its function is as follows. Exonuclease involved in the 3' processing of various precursor tRNAs. Initiates hydrolysis at the 3'-terminus of an RNA molecule and releases 5'-mononucleotides. This chain is Ribonuclease D, found in Psychromonas ingrahamii (strain DSM 17664 / CCUG 51855 / 37).